A 542-amino-acid chain; its full sequence is Phosphoacetylglucosamine mutase 2 (542 aa).

Residue Ser77 is the Phosphoserine intermediate of the active site. Position 77 (Ser77) interacts with Mg(2+). 2 positions are modified to phosphoserine: Ser77 and Ser82. Mg(2+)-binding residues include Asp292, Asp294, and Asp296. Residues 385 to 387, 510 to 514, and Arg519 each bind substrate; these read EAN and RSSGT.

The protein belongs to the phosphohexose mutase family. The cofactor is Mg(2+).

Its subcellular location is the cytoplasm. It is found in the nucleus. It catalyses the reaction N-acetyl-alpha-D-glucosamine 1-phosphate = N-acetyl-D-glucosamine 6-phosphate. The protein operates within nucleotide-sugar biosynthesis; UDP-N-acetyl-alpha-D-glucosamine biosynthesis; N-acetyl-alpha-D-glucosamine 1-phosphate from alpha-D-glucosamine 6-phosphate (route I): step 2/2. In terms of biological role, catalyzes the conversion of GlcNAc-6-P into GlcNAc-1-P during the synthesis of uridine diphosphate/UDP-GlcNAc, which is a biosynthetic precursor of chitin and also supplies the amino sugars for N-linked oligosaccharides of glycoproteins. This Schizosaccharomyces pombe (strain 972 / ATCC 24843) (Fission yeast) protein is Phosphoacetylglucosamine mutase 2.